A 684-amino-acid polypeptide reads, in one-letter code: Rabphilin-3A (684 aa).

The disordered stretch occupies residues 1-21; sequence MTDTVVNRWMYPGDGPLQSND. Residues 40–157 enclose the RabBD domain; the sequence is QRKQEELTDE…KRSGAWFFKG (118 aa). Residues 88–145 form an FYVE-type zinc finger; that stretch reads GDGVNRCILCGEQLGMLGSACVVCEDCKKNVCTKCGVETSNNRPHPVWLCKICLEQRE. 8 residues coordinate Zn(2+): C94, C97, C111, C114, C119, C122, C137, and C140. The disordered stretch occupies residues 162 to 377; sequence VLPQPMPIKK…EEEEANSYDS (216 aa). The segment covering 199 to 208 has biased composition (basic and acidic residues); it reads ARGDMEDRRA. An Omega-N-methylarginine modification is found at R223. The span at 243-252 shows a compositional bias: basic and acidic residues; the sequence is RDSEGWDHGH. Residue S274 is modified to Phosphoserine. Residues 283–299 show a composition bias toward pro residues; it reads ASMPSPAPPQPVQPGPP. Low complexity predominate over residues 301–310; that stretch reads GSRAAPGPGR. One can recognise a C2 1 domain in the interval 382–504; the sequence is TLGALEFSLL…KANQRKNFNI (123 aa). Ca(2+)-binding residues include M412, D413, D419, D474, E475, D476, E482, E529, D571, D577, D631, Y632, D633, and D639. The C2 2 domain maps to 540-673; that stretch reads ERGKILVSLM…NKDKKIERWH (134 aa). Residues S682 and S683 each carry the phosphoserine modification.

As to quaternary structure, interacts with RAB3B, RAB3C, RAB3D, RAB8A, RAB27A and RAB27B. Interacts with RAB3A; this interaction recruits RPH3A to synaptic vesicules. Interacts (via C2B domain) with SNAP25. Interacts with deubiquitinating enzyme CAND1; this interaction results in the deubiquitination of RPH3A. Interacts with GRIN2A and DLG4; this ternary complex regulates NMDA receptor composition at postsynaptic membranes. Interacts with SNCA. It depends on Ca(2+) as a cofactor. Post-translationally, ubiquitinated. Deubiquitinated by CAND1 to prevent its degradation. Specifically expressed in brain.

The protein resides in the cytoplasmic vesicle. It is found in the secretory vesicle. It localises to the synaptic vesicle membrane. The protein localises to the cell projection. Its subcellular location is the dendritic spine. The protein resides in the postsynaptic cell membrane. It is found in the membrane. Functionally, plays an essential role in docking and fusion steps of regulated exocytosis. At the presynaptic level, RPH3A is recruited by RAB3A to the synaptic vesicle membrane in a GTP-dependent manner where it modulates synaptic vesicle trafficking and calcium-triggered neurotransmitter release. In the post-synaptic compartment, forms a ternary complex with GRIN2A and DLG4 and regulates NMDA receptor stability. Also plays a role in the exocytosis of arginine vasopressin hormone. The polypeptide is Rabphilin-3A (Rph3a) (Rattus norvegicus (Rat)).